The primary structure comprises 354 residues: Guanine nucleotide-binding protein G(t) subunit alpha-2 (354 aa).

The segment at 1–28 (MGSGISAEDKELARRSKELEKKLQEDAD) is disordered. Gly-2 carries N-myristoyl glycine lipidation. Basic and acidic residues predominate over residues 7–28 (AEDKELARRSKELEKKLQEDAD). In terms of domain architecture, G-alpha spans 32 to 354 (KTVKLLLLGA…KENLKDCGLF (323 aa)). The tract at residues 35 to 48 (KLLLLGAGESGKST) is G1 motif. GTP contacts are provided by residues 40–47 (GAGESGKS), 175–181 (LRSRVKT), 200–204 (DVGGQ), 269–272 (NKKD), and Ala-326. Residues Ser-47 and Thr-181 each contribute to the Mg(2+) site. Residues 173-181 (DVLRSRVKT) are G2 motif. Residues 196-205 (FRMFDVGGQR) are G3 motif. Residues 265–272 (VLFLNKKD) form a G4 motif region. The tract at residues 324–329 (TCATDT) is G5 motif.

This sequence belongs to the G-alpha family. G(i/o/t/z) subfamily. As to quaternary structure, g proteins are composed of 3 units; alpha, beta and gamma. The alpha chain contains the guanine nucleotide binding site. In terms of tissue distribution, in the retina, expressed in the rod photoreceptors.

It localises to the cell projection. It is found in the cilium. The protein localises to the photoreceptor outer segment. The protein resides in the photoreceptor inner segment. Functionally, guanine nucleotide-binding proteins (G proteins) are involved as modulators or transducers in various transmembrane signaling systems. Transducin is an amplifier and one of the transducers of a visual impulse that performs the coupling between rhodopsin and cGMP-phosphodiesterase. In Mus musculus (Mouse), this protein is Guanine nucleotide-binding protein G(t) subunit alpha-2 (Gnat2).